We begin with the raw amino-acid sequence, 353 residues long: Holliday junction branch migration complex subunit RuvB (353 aa).

The segment at 4 to 186 is large ATPase domain (RuvB-L); it reads ADRLIAATHS…FGIVQRLEFY (183 aa). ATP contacts are provided by residues Ile25, Arg26, Gly67, Lys70, Thr71, Thr72, 133-135, Arg176, Tyr186, and Arg223; that span reads EDF. Mg(2+) is bound at residue Thr71. The tract at residues 187 to 257 is small ATPAse domain (RuvB-S); sequence STADLATIVS…VADLALNLLD (71 aa). A head domain (RuvB-H) region spans residues 260 to 353; that stretch reads EHGFDHQDRR…VDEFLDAVDD (94 aa). Residues Arg296, Arg315, and Arg320 each coordinate DNA.

Belongs to the RuvB family. As to quaternary structure, homohexamer. Forms an RuvA(8)-RuvB(12)-Holliday junction (HJ) complex. HJ DNA is sandwiched between 2 RuvA tetramers; dsDNA enters through RuvA and exits via RuvB. An RuvB hexamer assembles on each DNA strand where it exits the tetramer. Each RuvB hexamer is contacted by two RuvA subunits (via domain III) on 2 adjacent RuvB subunits; this complex drives branch migration. In the full resolvosome a probable DNA-RuvA(4)-RuvB(12)-RuvC(2) complex forms which resolves the HJ.

It is found in the cytoplasm. The catalysed reaction is ATP + H2O = ADP + phosphate + H(+). Its function is as follows. The RuvA-RuvB-RuvC complex processes Holliday junction (HJ) DNA during genetic recombination and DNA repair, while the RuvA-RuvB complex plays an important role in the rescue of blocked DNA replication forks via replication fork reversal (RFR). RuvA specifically binds to HJ cruciform DNA, conferring on it an open structure. The RuvB hexamer acts as an ATP-dependent pump, pulling dsDNA into and through the RuvAB complex. RuvB forms 2 homohexamers on either side of HJ DNA bound by 1 or 2 RuvA tetramers; 4 subunits per hexamer contact DNA at a time. Coordinated motions by a converter formed by DNA-disengaged RuvB subunits stimulates ATP hydrolysis and nucleotide exchange. Immobilization of the converter enables RuvB to convert the ATP-contained energy into a lever motion, pulling 2 nucleotides of DNA out of the RuvA tetramer per ATP hydrolyzed, thus driving DNA branch migration. The RuvB motors rotate together with the DNA substrate, which together with the progressing nucleotide cycle form the mechanistic basis for DNA recombination by continuous HJ branch migration. Branch migration allows RuvC to scan DNA until it finds its consensus sequence, where it cleaves and resolves cruciform DNA. This is Holliday junction branch migration complex subunit RuvB from Pseudomonas fluorescens (strain Pf0-1).